A 922-amino-acid polypeptide reads, in one-letter code: Protein translocase subunit SecA (922 aa).

ATP contacts are provided by residues Gln-87, 105 to 109 (GEGKT), and Asp-519. The segment at 850 to 891 (HASRQMRSIQGNAQHNSMGSFSGSGHGMGPTALSARSRPENA) is disordered. A compositionally biased stretch (polar residues) spans 854-865 (QMRSIQGNAQHN). 4 residues coordinate Zn(2+): Cys-906, Cys-908, Cys-917, and Cys-918.

The protein belongs to the SecA family. As to quaternary structure, monomer and homodimer. Part of the essential Sec protein translocation apparatus which comprises SecA, SecYEG and auxiliary proteins SecDF. Other proteins may also be involved. The cofactor is Zn(2+).

It localises to the cell inner membrane. The protein localises to the cytoplasm. The enzyme catalyses ATP + H2O + cellular proteinSide 1 = ADP + phosphate + cellular proteinSide 2.. Part of the Sec protein translocase complex. Interacts with the SecYEG preprotein conducting channel. Has a central role in coupling the hydrolysis of ATP to the transfer of proteins into and across the cell membrane, serving as an ATP-driven molecular motor driving the stepwise translocation of polypeptide chains across the membrane. The chain is Protein translocase subunit SecA from Treponema denticola (strain ATCC 35405 / DSM 14222 / CIP 103919 / JCM 8153 / KCTC 15104).